The chain runs to 452 residues: Bifunctional protein GlmU (452 aa).

The segment at 1–226 (MSLDIVILAA…AMEVQGANDR (226 aa)) is pyrophosphorylase. Residues 8–11 (LAAG), Lys22, Gln73, 78–79 (GT), 99–101 (YGD), Gly136, Glu151, Asn166, and Asn224 each bind UDP-N-acetyl-alpha-D-glucosamine. Asp101 contacts Mg(2+). Asn224 contacts Mg(2+). A linker region spans residues 227-247 (IQLAELERHYQLRAARRLMAQ). Residues 248 to 452 (GVTLRDPARF…IDGWQRPTKK (205 aa)) are N-acetyltransferase. The UDP-N-acetyl-alpha-D-glucosamine site is built by Arg330 and Lys348. The Proton acceptor role is filled by His360. The UDP-N-acetyl-alpha-D-glucosamine site is built by Tyr363 and Asn374. Acetyl-CoA is bound by residues Ala377, 383 to 384 (NY), Ser402, Ala420, and Arg437.

This sequence in the N-terminal section; belongs to the N-acetylglucosamine-1-phosphate uridyltransferase family. In the C-terminal section; belongs to the transferase hexapeptide repeat family. In terms of assembly, homotrimer. Mg(2+) is required as a cofactor.

Its subcellular location is the cytoplasm. The catalysed reaction is alpha-D-glucosamine 1-phosphate + acetyl-CoA = N-acetyl-alpha-D-glucosamine 1-phosphate + CoA + H(+). It carries out the reaction N-acetyl-alpha-D-glucosamine 1-phosphate + UTP + H(+) = UDP-N-acetyl-alpha-D-glucosamine + diphosphate. The protein operates within nucleotide-sugar biosynthesis; UDP-N-acetyl-alpha-D-glucosamine biosynthesis; N-acetyl-alpha-D-glucosamine 1-phosphate from alpha-D-glucosamine 6-phosphate (route II): step 2/2. Its pathway is nucleotide-sugar biosynthesis; UDP-N-acetyl-alpha-D-glucosamine biosynthesis; UDP-N-acetyl-alpha-D-glucosamine from N-acetyl-alpha-D-glucosamine 1-phosphate: step 1/1. It functions in the pathway bacterial outer membrane biogenesis; LPS lipid A biosynthesis. Functionally, catalyzes the last two sequential reactions in the de novo biosynthetic pathway for UDP-N-acetylglucosamine (UDP-GlcNAc). The C-terminal domain catalyzes the transfer of acetyl group from acetyl coenzyme A to glucosamine-1-phosphate (GlcN-1-P) to produce N-acetylglucosamine-1-phosphate (GlcNAc-1-P), which is converted into UDP-GlcNAc by the transfer of uridine 5-monophosphate (from uridine 5-triphosphate), a reaction catalyzed by the N-terminal domain. The sequence is that of Bifunctional protein GlmU from Stutzerimonas stutzeri (strain A1501) (Pseudomonas stutzeri).